The chain runs to 76 residues: U-actitoxin-Avd8c (76 aa).

Positions 1–16 (LVIVFVVLLGVPLISA) are cleaved as a signal peptide. The propeptide occupies 17-33 (NEEELLAILQDQRNDAR).

It belongs to the sea anemone 8 toxin family.

The protein resides in the secreted. It localises to the nematocyst. The chain is U-actitoxin-Avd8c from Anemonia viridis (Snakelocks anemone).